Consider the following 248-residue polypeptide: Indole-3-glycerol phosphate synthase (248 aa).

It belongs to the TrpC family.

The catalysed reaction is 1-(2-carboxyphenylamino)-1-deoxy-D-ribulose 5-phosphate + H(+) = (1S,2R)-1-C-(indol-3-yl)glycerol 3-phosphate + CO2 + H2O. It participates in amino-acid biosynthesis; L-tryptophan biosynthesis; L-tryptophan from chorismate: step 4/5. This chain is Indole-3-glycerol phosphate synthase, found in Sulfolobus acidocaldarius (strain ATCC 33909 / DSM 639 / JCM 8929 / NBRC 15157 / NCIMB 11770).